Reading from the N-terminus, the 184-residue chain is Flagellar transcriptional regulator FlhC (184 aa).

Positions 144, 147, 163, and 166 each coordinate Zn(2+).

The protein belongs to the FlhC family. In terms of assembly, heterohexamer composed of two FlhC and four FlhD subunits. Each FlhC binds a FlhD dimer, forming a heterotrimer, and a hexamer assembles by dimerization of two heterotrimers. Requires Zn(2+) as cofactor.

Its subcellular location is the cytoplasm. Functionally, functions in complex with FlhD as a master transcriptional regulator that regulates transcription of several flagellar and non-flagellar operons by binding to their promoter region. Activates expression of class 2 flagellar genes, including fliA, which is a flagellum-specific sigma factor that turns on the class 3 genes. Also regulates genes whose products function in a variety of physiological pathways. The polypeptide is Flagellar transcriptional regulator FlhC (Verminephrobacter eiseniae (strain EF01-2)).